A 509-amino-acid chain; its full sequence is Coiled-coil domain-containing protein 181 (509 aa).

Residues 60–82 (EHTKQHSDPDKSLQDDVSPRRND) are compositionally biased toward basic and acidic residues. Disordered regions lie at residues 60–121 (EHTK…EEDE) and 285–367 (GEPL…EEKE). A compositionally biased stretch (polar residues) spans 320–334 (RTQSARISPVTSTYC). Residues 335–375 (LSPRQKELQKQLEQKREKLKREEEQRKIEEEKEKKRENDIV) are a coiled coil. Positions 338–367 (RQKELQKQLEQKREKLKREEEQRKIEEEKE) are enriched in basic and acidic residues.

This sequence belongs to the CCDC181 family. Homodimer. Interacts with HOOK1. Interacts with HOOK2. Interacts with HOOK3.

It localises to the cytoplasm. Its subcellular location is the cytoskeleton. The protein resides in the cell projection. It is found in the cilium. The protein localises to the flagellum. Its function is as follows. Microtubule-binding protein that localizes to the microtubular manchette of elongating spermatids. The sequence is that of Coiled-coil domain-containing protein 181 from Macaca fascicularis (Crab-eating macaque).